Consider the following 224-residue polypeptide: MGQKGCPIGFRTAVTKKWRSLWYGNNQEFGKFLIEDVKIREFLKKKPSCQGAAGFVVKRMSGKIEVTIHTARPGLVIGKKGAEVESLKAELKKLTGKDVWVEIAEVKRPELNAQLVADGIAKQIERRVSFRRAMKKALQSVMDAGALGVKVQVSGRLAGAEIARSEWYKNGRVPLHTLRADIDYATASAETTYGIIGIKVWINLSEKKAVPAANHAGAASTAAA.

Residues isoleucine 39–lysine 107 form the KH type-2 domain.

It belongs to the universal ribosomal protein uS3 family. As to quaternary structure, part of the 30S ribosomal subunit. Forms a tight complex with proteins S10 and S14.

Functionally, binds the lower part of the 30S subunit head. Binds mRNA in the 70S ribosome, positioning it for translation. In Chlamydia trachomatis serovar A (strain ATCC VR-571B / DSM 19440 / HAR-13), this protein is Small ribosomal subunit protein uS3.